A 215-amino-acid chain; its full sequence is NAD(P)H-quinone oxidoreductase subunit I (215 aa).

4Fe-4S ferredoxin-type domains lie at 55-84 (GRIH…VDWV) and 95-124 (RNYS…MTEE). 8 residues coordinate [4Fe-4S] cluster: C64, C67, C70, C74, C104, C107, C110, and C114. The interval 166–215 (AGEMDPHGVPNDRPRAGQLPSQVLETLAPPAKVGAKNEGQSTGTTQEGEA) is disordered. A compositionally biased stretch (basic and acidic residues) spans 169-180 (MDPHGVPNDRPR). Residues 203–215 (EGQSTGTTQEGEA) show a composition bias toward polar residues.

It belongs to the complex I 23 kDa subunit family. In terms of assembly, NDH-1 is composed of at least 11 different subunits. Requires [4Fe-4S] cluster as cofactor.

Its subcellular location is the cellular thylakoid membrane. The catalysed reaction is a plastoquinone + NADH + (n+1) H(+)(in) = a plastoquinol + NAD(+) + n H(+)(out). It catalyses the reaction a plastoquinone + NADPH + (n+1) H(+)(in) = a plastoquinol + NADP(+) + n H(+)(out). Its function is as follows. NDH-1 shuttles electrons from an unknown electron donor, via FMN and iron-sulfur (Fe-S) centers, to quinones in the respiratory and/or the photosynthetic chain. The immediate electron acceptor for the enzyme in this species is believed to be plastoquinone. Couples the redox reaction to proton translocation, and thus conserves the redox energy in a proton gradient. The sequence is that of NAD(P)H-quinone oxidoreductase subunit I from Parasynechococcus marenigrum (strain WH8102).